A 184-amino-acid polypeptide reads, in one-letter code: ATP synthase subunit b 1 (184 aa).

A helical membrane pass occupies residues 4–24 (LSILAALAASPAMAATGPFFS).

This sequence belongs to the ATPase B chain family. In terms of assembly, F-type ATPases have 2 components, F(1) - the catalytic core - and F(0) - the membrane proton channel. F(1) has five subunits: alpha(3), beta(3), gamma(1), delta(1), epsilon(1). F(0) has three main subunits: a(1), b(2) and c(10-14). The alpha and beta chains form an alternating ring which encloses part of the gamma chain. F(1) is attached to F(0) by a central stalk formed by the gamma and epsilon chains, while a peripheral stalk is formed by the delta and b chains.

Its subcellular location is the cell inner membrane. Its function is as follows. F(1)F(0) ATP synthase produces ATP from ADP in the presence of a proton or sodium gradient. F-type ATPases consist of two structural domains, F(1) containing the extramembraneous catalytic core and F(0) containing the membrane proton channel, linked together by a central stalk and a peripheral stalk. During catalysis, ATP synthesis in the catalytic domain of F(1) is coupled via a rotary mechanism of the central stalk subunits to proton translocation. Functionally, component of the F(0) channel, it forms part of the peripheral stalk, linking F(1) to F(0). The protein is ATP synthase subunit b 1 of Cereibacter sphaeroides (strain ATCC 17025 / ATH 2.4.3) (Rhodobacter sphaeroides).